The following is a 177-amino-acid chain: Ribulose bisphosphate carboxylase small subunit, chloroplastic 6 (177 aa).

The transit peptide at 1-56 (MASSMMASTAAVARVGPAQTNMVAPFNGLRSSVAFPATRKANNDLSTLPSNGGRVS) directs the protein to the chloroplast.

It belongs to the RuBisCO small chain family. Heterohexadecamer of 8 large and 8 small subunits.

The protein localises to the plastid. Its subcellular location is the chloroplast. RuBisCO catalyzes two reactions: the carboxylation of D-ribulose 1,5-bisphosphate, the primary event in carbon dioxide fixation, as well as the oxidative fragmentation of the pentose substrate. Both reactions occur simultaneously and in competition at the same active site. Although the small subunit is not catalytic it is essential for maximal activity. The sequence is that of Ribulose bisphosphate carboxylase small subunit, chloroplastic 6 from Lemna gibba (Swollen duckweed).